We begin with the raw amino-acid sequence, 497 residues long: Serine carboxypeptidase-like 20 (497 aa).

Positions 1-29 (MSIITMVWLMKVFVFVTLLSLVFVITESA) are cleaved as a signal peptide. Cystine bridges form between C90-C386, C254-C266, and C289-C353. N111 and N146 each carry an N-linked (GlcNAc...) asparagine glycan. Residue S186 is part of the active site. A glycan (N-linked (GlcNAc...) asparagine) is linked at N249. The N-linked (GlcNAc...) asparagine glycan is linked to N405. Residue D421 is part of the active site. N463 carries an N-linked (GlcNAc...) asparagine glycan. H474 is an active-site residue. The Microbody targeting signal signature appears at 495–497 (SKI).

Belongs to the peptidase S10 family. As to expression, ubiquitous.

It is found in the secreted. Probable carboxypeptidase. This Arabidopsis thaliana (Mouse-ear cress) protein is Serine carboxypeptidase-like 20 (SCPL20).